Reading from the N-terminus, the 120-residue chain is Small ribosomal subunit protein eS25 (120 aa).

A disordered region spans residues 1–32; that stretch reads MPPKAGQTKKAKMEAANKGAKKTTKKWSKGQS. Positions 19 to 28 are enriched in basic residues; sequence GAKKTTKKWS.

This sequence belongs to the eukaryotic ribosomal protein eS25 family.

This is Small ribosomal subunit protein eS25 (RPS25) from Leishmania infantum.